The primary structure comprises 412 residues: MAKPQATVLIIGAGISGLTTSRLLTNSGIPNIVFEASTPDRSQGFAISLQEFGYSALLSALGDLPLSSLIRGVAPDREIGGTGWIDQALRDNCTGELLVAPDLTTAKQTVVRANRNALRRWIADCGEEELDVRYGHKLQSVEGTVGDITAVFENKARYRGSLVVAADGVNSTIRSQVLPGVVPETIPLIHYHGEFQLSRTAFDELIRPHSGHSNILVGVGDGFNTPLSICNMTKTQVHLDWSYSRTVTGDDDLLYRPNLPSEEAKQIPPALVKELAALALAEPWKRFLNPESLKSHRVFHWTTRCVYMTQDDARRAGEQGVVFVGDSWHAMPIFGGEGGNHALLDGVELADAVVKVVASPGKDHLSKAVASYYAGAWKRSQEAVRRSTQRFFLLHRPAAEWKEIAEKKKKAV.

Residues 1–21 form the signal peptide; the sequence is MAKPQATVLIIGAGISGLTTS. E35 and A46 together coordinate FAD. N92 is a glycosylation site (N-linked (GlcNAc...) asparagine). R119 contacts FAD. N170 and N231 each carry an N-linked (GlcNAc...) asparagine glycan. Positions 326 and 339 each coordinate FAD.

This sequence belongs to the paxM FAD-dependent monooxygenase family. FAD is required as a cofactor.

The protein operates within secondary metabolite biosynthesis. Functionally, FAD-dependent monooxygenase; part of the gene cluster that mediates the biosynthesis of neosartoricin B, a prenylated anthracenone that probably exhibits T-cell antiproliferative activity, suggestive of a physiological role as an immunosuppressive agent. The non-reducing polyketide synthase nscA probably synthesizes and cyclizes the decaketide backbone. The hydrolase nscB then mediates the product release through hydrolysis followed by spontaneous decarboxylation. The prenyltransferase nscD catalyzes the addition of the dimethylallyl group to the aromatic C5. The FAD-dependent monooxygenase nscC is then responsible for the stereospecific hydroxylation at C2. Neosartoricin B can be converted into two additional compounds neosartoricins C and D. Neosartoricin C is a spirocyclic compound that is cyclized through the attack of C3 hydroxyl on C14, followed by dehydration. On the other hand, neosartoricin D is a further cyclized compound in which attack of C2 on C14 in neosartoricin C results in the formation of the acetal-containing dioxabicyclo-octanone ring. Both of these compounds are novel and possibly represent related metabolites of the gene cluster. The protein is FAD-dependent monooxygenase nscC of Arthroderma otae (strain ATCC MYA-4605 / CBS 113480) (Microsporum canis).